A 372-amino-acid chain; its full sequence is Queuine tRNA-ribosyltransferase (372 aa).

Residue D89 is the Proton acceptor of the active site. Substrate-binding positions include 89–93 (DSGGF), D161, and G232. The interval 262–268 (GIGDLPS) is RNA binding. Catalysis depends on D281, which acts as the Nucleophile. The RNA binding; important for wobble base 34 recognition stretch occupies residues 286 to 290 (TKAAR). Residues C319, C321, C324, and H351 each coordinate Zn(2+).

The protein belongs to the queuine tRNA-ribosyltransferase family. As to quaternary structure, homodimer. Within each dimer, one monomer is responsible for RNA recognition and catalysis, while the other monomer binds to the replacement base PreQ1. Zn(2+) is required as a cofactor.

The catalysed reaction is 7-aminomethyl-7-carbaguanine + guanosine(34) in tRNA = 7-aminomethyl-7-carbaguanosine(34) in tRNA + guanine. Its pathway is tRNA modification; tRNA-queuosine biosynthesis. Catalyzes the base-exchange of a guanine (G) residue with the queuine precursor 7-aminomethyl-7-deazaguanine (PreQ1) at position 34 (anticodon wobble position) in tRNAs with GU(N) anticodons (tRNA-Asp, -Asn, -His and -Tyr). Catalysis occurs through a double-displacement mechanism. The nucleophile active site attacks the C1' of nucleotide 34 to detach the guanine base from the RNA, forming a covalent enzyme-RNA intermediate. The proton acceptor active site deprotonates the incoming PreQ1, allowing a nucleophilic attack on the C1' of the ribose to form the product. After dissociation, two additional enzymatic reactions on the tRNA convert PreQ1 to queuine (Q), resulting in the hypermodified nucleoside queuosine (7-(((4,5-cis-dihydroxy-2-cyclopenten-1-yl)amino)methyl)-7-deazaguanosine). This chain is Queuine tRNA-ribosyltransferase, found in Chlamydia abortus (strain DSM 27085 / S26/3) (Chlamydophila abortus).